The primary structure comprises 269 residues: MTKSLFDVLKELDSLVDFSRAKLQWDILIILATKGPSSTTEISQTINTSRKSIIDAIRKLVDKELVTKVKHDIYGLSDKGKELWNKIDSVLNIEVINGNNHKGQSKDEDILALENLSQYFYLINLSKMITINHDGLSLDKAARELGVSRQTLKYYLELFEEKKLFRVIGKRTHFKKNIYKCVLMNEGKRLLFRLPEFTKMKNNLPLKLLLRLTNSYTLEMANVKVMGFILISLPLLMYFRDQLGLIELPWLYAVIFLALLSVFAQILSR.

Over 1–218 the chain is Cytoplasmic; that stretch reads MTKSLFDVLK…LLRLTNSYTL (218 aa). Residues 39-62 constitute a DNA-binding region (H-T-H motif); sequence TTEISQTINTSRKSIIDAIRKLVD. Residues 219–239 form a helical membrane-spanning segment; it reads EMANVKVMGFILISLPLLMYF. Over 240–242 the chain is Extracellular; sequence RDQ. A helical membrane pass occupies residues 243–263; it reads LGLIELPWLYAVIFLALLSVF. Topologically, residues 264 to 269 are cytoplasmic; it reads AQILSR.

Its subcellular location is the cell membrane. Functionally, involved in regulation of archaellar gene expression. Activates flaB transcription upon nutrient starvation by acting on the flaB promoter. This chain is HTH-type transcriptional activator ArnR, found in Sulfolobus acidocaldarius (strain ATCC 33909 / DSM 639 / JCM 8929 / NBRC 15157 / NCIMB 11770).